The chain runs to 215 residues: Probable GTP-binding protein EngB (215 aa).

Residues 26-200 (EGIEVAFAGR…RAKLDEWFAP (175 aa)) enclose the EngB-type G domain. GTP contacts are provided by residues 34-41 (GRSNAGKS), 61-65 (GRTQL), 79-82 (DLPG), 146-149 (TKAD), and 179-181 (FSS). Mg(2+)-binding residues include Ser-41 and Thr-63.

Belongs to the TRAFAC class TrmE-Era-EngA-EngB-Septin-like GTPase superfamily. EngB GTPase family. The cofactor is Mg(2+).

Functionally, necessary for normal cell division and for the maintenance of normal septation. The protein is Probable GTP-binding protein EngB of Aliivibrio fischeri (strain ATCC 700601 / ES114) (Vibrio fischeri).